Here is a 272-residue protein sequence, read N- to C-terminus: Undecaprenyl-diphosphatase (272 aa).

The next 7 helical transmembrane spans lie at 22 to 42, 45 to 65, 92 to 112, 118 to 138, 189 to 209, 228 to 248, and 251 to 271; these read FLPV…GFTG, AETF…VVFW, SHII…HDVI, PQSV…AEIL, YTAS…ASGL, VGFV…LALI, and ISFI…YWVF.

Belongs to the UppP family.

It is found in the cell inner membrane. It carries out the reaction di-trans,octa-cis-undecaprenyl diphosphate + H2O = di-trans,octa-cis-undecaprenyl phosphate + phosphate + H(+). Catalyzes the dephosphorylation of undecaprenyl diphosphate (UPP). Confers resistance to bacitracin. The sequence is that of Undecaprenyl-diphosphatase from Photorhabdus laumondii subsp. laumondii (strain DSM 15139 / CIP 105565 / TT01) (Photorhabdus luminescens subsp. laumondii).